The chain runs to 234 residues: BTB/POZ domain-containing protein KCTD5 (234 aa).

Ala-2 carries the N-acetylalanine modification. The residue at position 10 (Ser-10) is a Phosphoserine. The 103-residue stretch at 44–146 (KWVRLNVGGT…LVKDKIRERD (103 aa)) folds into the BTB domain. Residues 213 to 234 (PYGTASEPSEKAKILQERGSRM) are disordered. Over residues 220-234 (PSEKAKILQERGSRM) the composition is skewed to basic and acidic residues.

Homopentamer. Interacts (via C-terminus) with GRASP55/GORASP2. Interacts with CUL3 and with ubiquitinated proteins. Interacts with CRY1. In terms of assembly, (Microbial infection) Interacts with adeno-associated virus 2 (AAV-2) REP proteins.

The protein resides in the cytoplasm. Its subcellular location is the cytosol. It localises to the nucleus. Its interaction with CUL3 suggests that it may act as a substrate adapter in some E3 ligase complex. Does not affect the function of Kv channel Kv2.1/KCNB1, Kv1.2/KCNA2, Kv4.2/KCND2 and Kv3.4/KCNC4. This chain is BTB/POZ domain-containing protein KCTD5 (KCTD5), found in Homo sapiens (Human).